We begin with the raw amino-acid sequence, 428 residues long: Putative zinc metalloprotease SACOL1281 (428 aa).

A Zn(2+)-binding site is contributed by His21. Glu22 is a catalytic residue. Zn(2+) is bound at residue His25. 4 consecutive transmembrane segments (helical) span residues 172–194 (FLTLFAGPLFNFILALVLFIGLA), 309–331 (GSTYIFTAVVGMLASIFTGGFSF), 352–374 (IISLIGYTALLSVNLGIMNLIPI), and 401–420 (TTIIAIGAIFMVVIMILVTW). A PDZ domain is found at 186-269 (ALVLFIGLAY…TKSVELTPKK (84 aa)).

The protein belongs to the peptidase M50B family. Requires Zn(2+) as cofactor.

It localises to the cell membrane. This is Putative zinc metalloprotease SACOL1281 from Staphylococcus aureus (strain COL).